The primary structure comprises 941 residues: MINIKKSLNLPKTKFPMKANLAYKENEILETWKKINLYNKLHKNKKKNKQFFLQDGPPYANGNIHIGHAVNKILKDIILKFKRMSGFFSPYIPCWDCHGLPIEHIIEKKLSKKKINKKEFRKICFKYVLKQVEKQKNDFIRLGIIANWDNINLSTDYINQSNTIKVLTKIVEKGLIYRDLKPVYWCFDCQSALAEAEIEYKFKKSISIYIEYKLIENSILKNNFFKNYNKKIFNNISILIFTTTPWTIPTCQAIAINPKLYYQIIKINKKYYICIEELTKKIFKKNNIKKWKIILSFKGKEIEHIKCFHPFLNTQIPIILSKHVSNQLGTGAVHMSPDHGYEDFIACKKYKIIPKQIVDSHGFYKIKKYSQLNNIHIFNKENKIIYILKKNKKLFFFQTINHNYPHCWRHKKPIIFRATPQWFINLSKKNFKEDTFNKIKKILWIPSWGKNKMKKMLKIRPDWCISRQRIWGIPLPFFIHKNTGELHPNTVMIMKKIVKKIRNHGYKIWWESNVNTWIKKDSETYRKVNDVLDVWFESGANHQLKIYKHNIKNKKNYVADLYLEGSDQHRGWFMSSLIISMITKTIPPYLSVITHGFVLDKNGQKMSKSLNNNISPKKIIQKKGADILRLWVAYTNYTNDISISNEILEQISDNYRRIRNTIRFLFSNIFDFKANIHIIKYEKMLFLDQWIIEKTYNYQRKIIKKYSQYQFHKVIKKIINFCSIELGSCYLELIKDRQYTMHKNSIERRSSQTAIFYILQFLVRWIAPILSFTAEEIWSQLQEKKEKSIFMTQWYKNKQLIKKKSTYNLFFWKKIFAIRKEINLFIETEKKNKFIKNSLEIILLLYINKKLFNFLLLFNNELKFIFLVSETQLHKYSSAPSLAIKSKKIKKFKILIKKSKKIKCPRCWNYTKKNNFLKNKNSICNKCIKNINQTNKKHIFL.

The 'HIGH' region motif lies at proline 58 to histidine 68. An L-isoleucyl-5'-AMP-binding site is contributed by glutamate 564. The short motif at lysine 605–serine 609 is the 'KMSKS' region element. Lysine 608 contributes to the ATP binding site. Zn(2+) is bound by residues cysteine 904, cysteine 907, cysteine 924, and cysteine 927.

The protein belongs to the class-I aminoacyl-tRNA synthetase family. IleS type 1 subfamily. Monomer. Requires Zn(2+) as cofactor.

Its subcellular location is the cytoplasm. It carries out the reaction tRNA(Ile) + L-isoleucine + ATP = L-isoleucyl-tRNA(Ile) + AMP + diphosphate. Catalyzes the attachment of isoleucine to tRNA(Ile). As IleRS can inadvertently accommodate and process structurally similar amino acids such as valine, to avoid such errors it has two additional distinct tRNA(Ile)-dependent editing activities. One activity is designated as 'pretransfer' editing and involves the hydrolysis of activated Val-AMP. The other activity is designated 'posttransfer' editing and involves deacylation of mischarged Val-tRNA(Ile). This is Isoleucine--tRNA ligase from Buchnera aphidicola subsp. Cinara cedri (strain Cc).